We begin with the raw amino-acid sequence, 662 residues long: Polyunsaturated fatty acid (12S)/(13S)-lipoxygenase, epidermal-type (662 aa).

Residues 2–114 (GKYKILVVTG…TIYLPEGTAL (113 aa)) enclose the PLAT domain. A Lipoxygenase domain is found at 114–662 (LKVNDDTKNL…PSMVENSVTI (549 aa)). Residues H360, H365, H540, H544, and I662 each coordinate Fe cation.

It belongs to the lipoxygenase family. The cofactor is Fe cation.

It is found in the cytoplasm. It catalyses the reaction (5Z,8Z,11Z,14Z)-eicosatetraenoate + O2 = (12S)-hydroperoxy-(5Z,8Z,10E,14Z)-eicosatetraenoate. It carries out the reaction 1-O-methyl-(9Z,12Z)-octadecadienoate + O2 = 1-O-methyl-(13S)-hydroperoxy-(9Z,11E)-octadecadienoate. The enzyme catalyses (8Z,11Z,14Z)-eicosatrienoate + O2 = (12S)-hydroperoxy-(8Z,10E,14Z)-eicosatrienoate. The catalysed reaction is (5Z,8Z,11Z)-eicosatrienoate + O2 = (12S)-hydroperoxy-(5Z,8Z,10E)-eicosatrienoate. It catalyses the reaction 1-O-methyl-(5Z,8Z,11Z,14Z)-eicosatetraenoate + O2 = 1-O-methyl-(12S)-hydroperoxy-(5Z,8Z,10E,14Z)-eicosatetraenoate. It carries out the reaction (9Z,12Z)-octadecadienoate + O2 = (13S)-hydroperoxy-(9Z,11E)-octadecadienoate. The enzyme catalyses (4Z,7Z,10Z,13Z,16Z,19Z)-docosahexaenoate + O2 = (14S)-hydroperoxy-(4Z,7Z,10Z,12E,16Z,19Z)-docosahexaenoate. It participates in lipid metabolism; hydroperoxy eicosatetraenoic acid biosynthesis. Arachidonate 12-lipoxygenase activity is decreased when the pH decreases from 7.4 to 6.0. Its function is as follows. Catalyzes the regio and stereo-specific incorporation of a single molecule of dioxygen into free and esterified polyunsaturated fatty acids generating lipid hydroperoxides that can be further reduced to the corresponding hydroxy species. Shows increasing catalytic activity within the series arachidonic acid &lt; 5,8,11-eicosatrienoic acid &lt; linoleic acid &lt; 8,11,14-eicosatrienoic acid. The chain is Polyunsaturated fatty acid (12S)/(13S)-lipoxygenase, epidermal-type from Rattus norvegicus (Rat).